Consider the following 878-residue polypeptide: Alanine--tRNA ligase (878 aa).

His570, His574, Cys672, and His676 together coordinate Zn(2+). The segment at 844-864 is disordered; it reads GGKGGGGRPDMAQAGGPDASA. Positions 855 to 864 are enriched in low complexity; the sequence is AQAGGPDASA.

The protein belongs to the class-II aminoacyl-tRNA synthetase family. The cofactor is Zn(2+).

The protein localises to the cytoplasm. It carries out the reaction tRNA(Ala) + L-alanine + ATP = L-alanyl-tRNA(Ala) + AMP + diphosphate. Catalyzes the attachment of alanine to tRNA(Ala) in a two-step reaction: alanine is first activated by ATP to form Ala-AMP and then transferred to the acceptor end of tRNA(Ala). Also edits incorrectly charged Ser-tRNA(Ala) and Gly-tRNA(Ala) via its editing domain. In Paramagnetospirillum magneticum (strain ATCC 700264 / AMB-1) (Magnetospirillum magneticum), this protein is Alanine--tRNA ligase.